We begin with the raw amino-acid sequence, 772 residues long: U3 small nucleolar RNA-associated protein 25 homolog (772 aa).

A disordered region spans residues methionine 1 to glutamate 179. Promotes p53/TP53 degradation stretches follow at residues methionine 1–proline 201 and valine 589–glutamate 651. Serine 10 is subject to Phosphoserine. The segment covering arginine 25–lysine 43 has biased composition (basic and acidic residues). Serine 52, serine 60, and serine 64 each carry phosphoserine. A compositionally biased stretch (basic and acidic residues) spans aspartate 54 to serine 70. Residues glutamate 84–serine 124 show a composition bias toward acidic residues. A compositionally biased stretch (low complexity) spans glycine 127–glutamate 136. The segment covering serine 169 to glutamate 179 has biased composition (basic and acidic residues). The represses p53/TP53 degradation stretch occupies residues leucine 652–tyrosine 713.

The protein belongs to the UTP25 family. As to quaternary structure, interacts with CAPN3; the interaction is required for CAPN3 translocation to the nucleolus. Post-translationally, phosphorylated. Phosphorylation is required to promote p53/TP53 degradation in the nucleolus which promotes cell cycle progression and liver development. In terms of tissue distribution, expressed in all tissues tested: brain, small intestine, large intestine, stomach, liver, spleen, thymus, lung, kidney and testes (at protein level).

The protein localises to the nucleus. It localises to the nucleolus. Functionally, component of the ribosomal small subunit processome for the biogenesis of ribosomes, functions in pre-ribosomal RNA (pre-rRNA) processing. Essential for embryonic development in part through the regulation of p53 pathway. Controls the expansion growth of digestive organs and liver. Also involved in the sympathetic neuronal development. Mediates, with CAPN3, the proteasome-independent degradation of p53/TP53. In Mus musculus (Mouse), this protein is U3 small nucleolar RNA-associated protein 25 homolog.